A 274-amino-acid polypeptide reads, in one-letter code: 2-dehydro-3-deoxyphosphooctonate aldolase (274 aa).

It belongs to the KdsA family.

Its subcellular location is the cytoplasm. It catalyses the reaction D-arabinose 5-phosphate + phosphoenolpyruvate + H2O = 3-deoxy-alpha-D-manno-2-octulosonate-8-phosphate + phosphate. It participates in carbohydrate biosynthesis; 3-deoxy-D-manno-octulosonate biosynthesis; 3-deoxy-D-manno-octulosonate from D-ribulose 5-phosphate: step 2/3. The protein operates within bacterial outer membrane biogenesis; lipopolysaccharide biosynthesis. In Legionella pneumophila (strain Corby), this protein is 2-dehydro-3-deoxyphosphooctonate aldolase.